The primary structure comprises 232 residues: Octanoyltransferase (232 aa).

The BPL/LPL catalytic domain occupies 43-231; that stretch reads LPTSNYLLFV…HLTHLFEAEI (189 aa). Substrate is bound by residues 88 to 95, 160 to 162, and 173 to 175; these read RGGDITYH, AMG, and GFA. Residue Cys-191 is the Acyl-thioester intermediate of the active site.

Belongs to the LipB family.

Its subcellular location is the cytoplasm. The catalysed reaction is octanoyl-[ACP] + L-lysyl-[protein] = N(6)-octanoyl-L-lysyl-[protein] + holo-[ACP] + H(+). It functions in the pathway protein modification; protein lipoylation via endogenous pathway; protein N(6)-(lipoyl)lysine from octanoyl-[acyl-carrier-protein]: step 1/2. Its function is as follows. Catalyzes the transfer of endogenously produced octanoic acid from octanoyl-acyl-carrier-protein onto the lipoyl domains of lipoate-dependent enzymes. Lipoyl-ACP can also act as a substrate although octanoyl-ACP is likely to be the physiological substrate. In Flavobacterium johnsoniae (strain ATCC 17061 / DSM 2064 / JCM 8514 / BCRC 14874 / CCUG 350202 / NBRC 14942 / NCIMB 11054 / UW101) (Cytophaga johnsonae), this protein is Octanoyltransferase.